The primary structure comprises 133 residues: Large ribosomal subunit protein uL14m (133 aa).

Belongs to the universal ribosomal protein uL14 family. As to quaternary structure, probably part of the large ribosomal subunit.

The protein localises to the hydrogenosome. This is Large ribosomal subunit protein uL14m (rpl14) from Nyctotherus ovalis.